Here is a 461-residue protein sequence, read N- to C-terminus: Cysteine--tRNA ligase (461 aa).

Residue Cys-28 coordinates Zn(2+). The short motif at 30 to 40 (ITVYDLCHIGH) is the 'HIGH' region element. Zn(2+) contacts are provided by Cys-209, His-234, and Glu-238. A 'KMSKS' region motif is present at residues 266-270 (KMSKS). Lys-269 contributes to the ATP binding site.

Belongs to the class-I aminoacyl-tRNA synthetase family. As to quaternary structure, monomer. Zn(2+) serves as cofactor.

The protein resides in the cytoplasm. The catalysed reaction is tRNA(Cys) + L-cysteine + ATP = L-cysteinyl-tRNA(Cys) + AMP + diphosphate. In Shigella boydii serotype 18 (strain CDC 3083-94 / BS512), this protein is Cysteine--tRNA ligase.